The primary structure comprises 516 residues: Probable metalloreductase AIM14 (516 aa).

The next 7 membrane-spanning stretches (helical) occupy residues 18–38 (IGYG…LLLL), 64–84 (LHLP…YSVI), 97–117 (LSYV…YILS), 128–148 (HMWL…AFVI), 168–188 (LLGF…TGVI), 195–215 (SFYM…PVHA), and 217–237 (PGVA…HALA). The region spanning 94 to 207 (LGRLSYVLLF…MVHQINAFAI (114 aa)) is the Ferric oxidoreductase domain. Positions 238-363 (RVSFCMSSAV…GGTGISLGLP (126 aa)) constitute an FAD-binding FR-type domain.

This sequence belongs to the ferric reductase (FRE) family. AIM14 subfamily.

It localises to the membrane. Functionally, probable cell surface metalloreductase. May be involved in iron or copper homeostasis. This is Probable metalloreductase AIM14 (AIM14) from Eremothecium gossypii (strain ATCC 10895 / CBS 109.51 / FGSC 9923 / NRRL Y-1056) (Yeast).